A 446-amino-acid polypeptide reads, in one-letter code: MKEIEKLKEEYPLLNKLIETEEVLWVNPNMEKYETAIKDSPLSEENVKDAKERLKRFASYIAKVFPETKETKGIIESPLLKIPSMKQALEKNYEQPILGELLLKCDSHLPISGSIKARGGIYEVLKHAEQLALQHGMLTEEDDYSILDSDTCREFFAKYSIAVGSTGNLGLSIGIMSAKLGFNVTVHMSADAKQWKKDLLRSKGVNVIEYEADYSKAVEEGRRQADADPSCYFVDDENSHDLFLGYAVAASRLQKQLEELEIIVDEEHPLFVYLPCGVGGGPGGVAFGLKLLYKDNVHCFFAEPTHSPCMLIGLMTGLHDKIAVQDIGIDNVTDADGLAVGRPSGFVGKTMEPFLSGDYTVSDEELYRLLKELADTENIYLEPSALAGMIGPVRVCKEDAYLQKQQLMEKVQKGTHIVWGTGGSMVPEDVMNGYYKTGEALTILEK.

Residue K116 is modified to N6-(pyridoxal phosphate)lysine.

This sequence belongs to the serine/threonine dehydratase family. DsdA subfamily. Requires pyridoxal 5'-phosphate as cofactor.

It catalyses the reaction D-serine = pyruvate + NH4(+). This is Probable D-serine dehydratase from Bacillus thuringiensis (strain Al Hakam).